The sequence spans 196 residues: dTDP-4-dehydro-6-deoxyglucose 3-epimerase (196 aa).

Substrate-binding positions include Arg-21, Glu-26, Gln-45–Asn-47, and Arg-57. His-60 functions as the Proton acceptor in the catalytic mechanism. 2 residues coordinate substrate: Lys-70 and Arg-117. The active-site Proton donor is Tyr-130. Positions 141 and 166 each coordinate substrate.

Belongs to the dTDP-4-dehydrorhamnose 3,5-epimerase family. Homodimer.

The enzyme catalyses dTDP-4-dehydro-6-deoxy-alpha-D-glucose = dTDP-4-dehydro-6-deoxy-alpha-D-allose. Its pathway is antibiotic biosynthesis. In terms of biological role, involved in the biosynthesis of dTDP-6-deoxy-D-allose, an intermediate in the biosynthesis of mycinose, which is one of the two unusual sugars attached to the 16-membered macrolactone ring of the aglycone antibiotic chalcomycin. Catalyzes the conversion of dTDP-4-oxo-6-deoxyglucose to dTDP-4-oxo-6-deoxyallose, via a C-3 epimerization. The protein is dTDP-4-dehydro-6-deoxyglucose 3-epimerase of Streptomyces bikiniensis.